The chain runs to 189 residues: Isopentenyl-diphosphate Delta-isomerase (189 aa).

2 residues coordinate Mn(2+): H27 and H34. The region spanning 32–171 is the Nudix hydrolase domain; it reads PLHFAFSTYI…PFVFSPWLVD (140 aa). C69 is a catalytic residue. C69 lines the Mg(2+) pocket. H71 provides a ligand contact to Mn(2+). E89 is a Mg(2+) binding site. Residues E119 and E121 each contribute to the Mn(2+) site. E121 is a catalytic residue.

It belongs to the IPP isomerase type 1 family. It depends on Mg(2+) as a cofactor. Requires Mn(2+) as cofactor.

It localises to the cytoplasm. It carries out the reaction isopentenyl diphosphate = dimethylallyl diphosphate. The protein operates within isoprenoid biosynthesis; dimethylallyl diphosphate biosynthesis; dimethylallyl diphosphate from isopentenyl diphosphate: step 1/1. Catalyzes the 1,3-allylic rearrangement of the homoallylic substrate isopentenyl (IPP) to its highly electrophilic allylic isomer, dimethylallyl diphosphate (DMAPP). The polypeptide is Isopentenyl-diphosphate Delta-isomerase (Corynebacterium glutamicum (strain ATCC 13032 / DSM 20300 / JCM 1318 / BCRC 11384 / CCUG 27702 / LMG 3730 / NBRC 12168 / NCIMB 10025 / NRRL B-2784 / 534)).